The sequence spans 147 residues: 3-dehydroquinate dehydratase (147 aa).

Tyr23 serves as the catalytic Proton acceptor. Substrate contacts are provided by Asn75, His81, and Asp88. His101 serves as the catalytic Proton donor. Residues 102-103 (LS) and Arg112 each bind substrate.

It belongs to the type-II 3-dehydroquinase family. As to quaternary structure, homododecamer.

It catalyses the reaction 3-dehydroquinate = 3-dehydroshikimate + H2O. The protein operates within metabolic intermediate biosynthesis; chorismate biosynthesis; chorismate from D-erythrose 4-phosphate and phosphoenolpyruvate: step 3/7. Functionally, catalyzes a trans-dehydration via an enolate intermediate. The sequence is that of 3-dehydroquinate dehydratase from Stenotrophomonas maltophilia (strain K279a).